Reading from the N-terminus, the 177-residue chain is Transcription termination/antitermination protein NusG (177 aa).

The region spanning 128 to 156 is the KOW domain; it reads ETVKVIDGPFANFTGSIEEIDYDKSKVKV.

This sequence belongs to the NusG family.

Participates in transcription elongation, termination and antitermination. Stimulates RNA polymerase pausing at U107 and U144 in the trp leader. NusG-stimulated pausing is sequence specific. Does not affect trp leader termination. The chain is Transcription termination/antitermination protein NusG from Bacillus subtilis (strain 168).